Consider the following 643-residue polypeptide: Threonine--tRNA ligase (643 aa).

The region spanning 1-61 is the TGS domain; the sequence is MIKVSLKDGS…NEDVSLSICT (61 aa). Residues 240–540 form a catalytic region; the sequence is DHNKLGRELK…LIEKYAGAFP (301 aa). Residues cysteine 335, histidine 386, and histidine 517 each coordinate Zn(2+).

This sequence belongs to the class-II aminoacyl-tRNA synthetase family. As to quaternary structure, homodimer. Zn(2+) serves as cofactor.

Its subcellular location is the cytoplasm. The enzyme catalyses tRNA(Thr) + L-threonine + ATP = L-threonyl-tRNA(Thr) + AMP + diphosphate + H(+). Functionally, catalyzes the attachment of threonine to tRNA(Thr) in a two-step reaction: L-threonine is first activated by ATP to form Thr-AMP and then transferred to the acceptor end of tRNA(Thr). Also edits incorrectly charged L-seryl-tRNA(Thr). The sequence is that of Threonine--tRNA ligase from Clostridium botulinum (strain Alaska E43 / Type E3).